Here is a 185-residue protein sequence, read N- to C-terminus: Phosphatidylglycerophosphatase GEP4, mitochondrial (185 aa).

A Phosphoryl acceptor motif is present at residues 45–49 (DKDNC).

It belongs to the GEP4 family.

It localises to the mitochondrion inner membrane. The enzyme catalyses a 1,2-diacyl-sn-glycero-3-phospho-(1'-sn-glycero-3'-phosphate) + H2O = a 1,2-diacyl-sn-glycero-3-phospho-(1'-sn-glycerol) + phosphate. It functions in the pathway phospholipid metabolism; phosphatidylglycerol biosynthesis; phosphatidylglycerol from CDP-diacylglycerol: step 2/2. Functionally, phosphatidylglycerophosphatase involved in the biosynthesis of cardiolipin (CL), a unique dimeric phosphoglycerolipid predominantly present in mitochondrial membranes and which has important functions for cellular energy metabolism, mitochondrial dynamics and the initiation of apoptotic pathways. Required for the stability of respiratory chain supercomplexes and for growth at elevated temperature, in presence of ethidium bromide or in absence of prohibitins. In Saccharomyces cerevisiae (strain ATCC 204508 / S288c) (Baker's yeast), this protein is Phosphatidylglycerophosphatase GEP4, mitochondrial (GEP4).